Reading from the N-terminus, the 297-residue chain is Acetyl-coenzyme A carboxylase carboxyl transferase subunit beta (297 aa).

A CoA carboxyltransferase N-terminal domain is found at 27–296 (LWHKCPSCEA…PEQAREAAAV (270 aa)). Zn(2+) is bound by residues Cys-31, Cys-34, Cys-50, and Cys-53. A C4-type zinc finger spans residues 31–53 (CPSCEAVLYRPELEKTLDVCPKC).

It belongs to the AccD/PCCB family. In terms of assembly, acetyl-CoA carboxylase is a heterohexamer composed of biotin carboxyl carrier protein (AccB), biotin carboxylase (AccC) and two subunits each of ACCase subunit alpha (AccA) and ACCase subunit beta (AccD). Zn(2+) serves as cofactor.

Its subcellular location is the cytoplasm. The enzyme catalyses N(6)-carboxybiotinyl-L-lysyl-[protein] + acetyl-CoA = N(6)-biotinyl-L-lysyl-[protein] + malonyl-CoA. Its pathway is lipid metabolism; malonyl-CoA biosynthesis; malonyl-CoA from acetyl-CoA: step 1/1. Functionally, component of the acetyl coenzyme A carboxylase (ACC) complex. Biotin carboxylase (BC) catalyzes the carboxylation of biotin on its carrier protein (BCCP) and then the CO(2) group is transferred by the transcarboxylase to acetyl-CoA to form malonyl-CoA. This Pseudomonas putida (strain GB-1) protein is Acetyl-coenzyme A carboxylase carboxyl transferase subunit beta.